The chain runs to 302 residues: Ribosomal RNA small subunit methyltransferase H (302 aa).

Residues 34 to 36, Asp53, Phe80, Asp101, and Gln108 contribute to the S-adenosyl-L-methionine site; that span reads AGH. A disordered region spans residues 283–302; the sequence is LEENPRSKSAKMRVLKKIER. The segment covering 290–302 has biased composition (basic residues); sequence KSAKMRVLKKIER.

It belongs to the methyltransferase superfamily. RsmH family.

The protein localises to the cytoplasm. It catalyses the reaction cytidine(1402) in 16S rRNA + S-adenosyl-L-methionine = N(4)-methylcytidine(1402) in 16S rRNA + S-adenosyl-L-homocysteine + H(+). Functionally, specifically methylates the N4 position of cytidine in position 1402 (C1402) of 16S rRNA. The polypeptide is Ribosomal RNA small subunit methyltransferase H (Mycoplasma mobile (strain ATCC 43663 / 163K / NCTC 11711) (Mesomycoplasma mobile)).